A 1016-amino-acid polypeptide reads, in one-letter code: DENN domain-containing protein 1A (1016 aa).

The uDENN domain maps to 13-145 (FEVYVEVAYP…HRLPIPDPGV (133 aa)). One can recognise a cDENN domain in the interval 162–298 (ELPSIPENRN…VISSLKNRLK (137 aa)). The 79-residue stretch at 300–378 (VSTTTGDGVA…DGRLDLLNSG (79 aa)) folds into the dDENN domain. Residues 381–385 (FSDVF) carry the FXDXF motif motif. The interval 453–565 (DITENGCVSS…GPTPAPPDRA (113 aa)) is disordered. Serine 473 carries the post-translational modification Phosphoserine. Basic and acidic residues predominate over residues 479 to 489 (QDPRLREDRRP). The segment covering 500-509 (PRPHVVRRPK) has biased composition (basic residues). A Phosphothreonine modification is found at threonine 519. Phosphoserine occurs at positions 520, 522, 523, 536, 538, and 546. Residues 569 to 578 (DLLEDVFSSL) carry the Clathrin box motif. Phosphoserine is present on serine 592. The segment at 681–737 (LSPSIKEETPIPTPGSITIPRPQGRKTPELGIVPPPPTARPAKLQAAGGPLGDFSSE) is disordered. Serine 750 bears the Phosphoserine mark. At arginine 760 the chain carries Omega-N-methylarginine. Disordered stretches follow at residues 763–783 (PQGP…AGTG) and 935–1016 (SARA…ETFE). A compositionally biased stretch (pro residues) spans 954 to 970 (LLPPRPPQSLQPTPQPS). Basic and acidic residues-rich tracts occupy residues 977–988 (DPFEDLLRKTKQ) and 1007–1016 (QLRRQWETFE).

In terms of assembly, interacts with RAB35. Interacts with clathrin and with the adapter protein complex 2, AP-2. Interacts with ITSN1 and SH3GL2. Interacts (when phosphorylated) with YWHAE. Post-translationally, phosphorylated on serine and/or threonine in an Akt-dependent manner. Phosphorylation probably regulates the guanine nucleotide exchange factor (GEF) activity, possibly by disrupting an intramolecular interaction between the DENN domain and the C-terminus of the protein, thereby relieving the autoinhibition.

The protein localises to the cytoplasmic vesicle. Its subcellular location is the clathrin-coated vesicle membrane. The protein resides in the presynaptic cell membrane. With respect to regulation, the guanine nucleotide exchange factor (GEF) activity is autoinhibited. Autoinhibition may be the result of intramolecular interaction between the DENN domain and the C-terminus, which is disrupted upon phosphorylation. Activation is regulated by Akt activation. In terms of biological role, guanine nucleotide exchange factor (GEF) regulating clathrin-mediated endocytosis through RAB35 activation. Promotes the exchange of GDP to GTP, converting inactive GDP-bound RAB35 into its active GTP-bound form. Regulates clathrin-mediated endocytosis of synaptic vesicles and mediates exit from early endosomes. Binds phosphatidylinositol-phosphates (PtdInsPs), with some preference for PtdIns(3)P. The protein is DENN domain-containing protein 1A (Dennd1a) of Mus musculus (Mouse).